Reading from the N-terminus, the 125-residue chain is Apolipoprotein C-IV (125 aa).

An N-terminal signal peptide occupies residues 1–27 (MSLLRHSLQALPALCLCVLVLACIGAC).

Belongs to the apolipoprotein C4 family.

The protein localises to the secreted. Its function is as follows. May participate in lipoprotein metabolism. In Ateles geoffroyi (Black-handed spider monkey), this protein is Apolipoprotein C-IV (APOC4).